We begin with the raw amino-acid sequence, 129 residues long: Small ribosomal subunit protein uS11 (129 aa).

It belongs to the universal ribosomal protein uS11 family. Part of the 30S ribosomal subunit. Interacts with proteins S7 and S18. Binds to IF-3.

Its function is as follows. Located on the platform of the 30S subunit, it bridges several disparate RNA helices of the 16S rRNA. Forms part of the Shine-Dalgarno cleft in the 70S ribosome. The sequence is that of Small ribosomal subunit protein uS11 from Bartonella tribocorum (strain CIP 105476 / IBS 506).